The primary structure comprises 298 residues: N-acetylmuramic acid 6-phosphate etherase (298 aa).

The 164-residue stretch at 55-218 (ITESLRRGGR…STASMVRLGK (164 aa)) folds into the SIS domain. Catalysis depends on Glu83, which acts as the Proton donor. The active site involves Glu114.

Belongs to the GCKR-like family. MurNAc-6-P etherase subfamily. Homodimer.

The catalysed reaction is N-acetyl-D-muramate 6-phosphate + H2O = N-acetyl-D-glucosamine 6-phosphate + (R)-lactate. The protein operates within amino-sugar metabolism; N-acetylmuramate degradation. Its function is as follows. Specifically catalyzes the cleavage of the D-lactyl ether substituent of MurNAc 6-phosphate, producing GlcNAc 6-phosphate and D-lactate. The protein is N-acetylmuramic acid 6-phosphate etherase of Mycolicibacterium smegmatis (strain ATCC 700084 / mc(2)155) (Mycobacterium smegmatis).